We begin with the raw amino-acid sequence, 97 residues long: RNA-binding protein Hfq (97 aa).

The Sm domain occupies 10 to 70; it reads DPFLNALRKE…ISTIVPARSV (61 aa). The disordered stretch occupies residues 74 to 97; sequence HENRPQAAPTSTLVQVETVQQPAE. Residues 81–97 show a composition bias toward polar residues; it reads APTSTLVQVETVQQPAE.

It belongs to the Hfq family. Homohexamer.

In terms of biological role, RNA chaperone that binds small regulatory RNA (sRNAs) and mRNAs to facilitate mRNA translational regulation in response to envelope stress, environmental stress and changes in metabolite concentrations. Also binds with high specificity to tRNAs. This chain is RNA-binding protein Hfq, found in Neisseria meningitidis serogroup A / serotype 4A (strain DSM 15465 / Z2491).